A 113-amino-acid chain; its full sequence is UPF0122 protein MCAP_0480 (113 aa).

Belongs to the UPF0122 family.

Might take part in the signal recognition particle (SRP) pathway. This is inferred from the conservation of its genetic proximity to ftsY/ffh. May be a regulatory protein. The polypeptide is UPF0122 protein MCAP_0480 (Mycoplasma capricolum subsp. capricolum (strain California kid / ATCC 27343 / NCTC 10154)).